We begin with the raw amino-acid sequence, 65 residues long: Small, acid-soluble spore protein C3 (65 aa).

It belongs to the alpha/beta-type SASP family.

Its function is as follows. SASP are bound to spore DNA. They are double-stranded DNA-binding proteins that cause DNA to change to an a-like conformation. They protect the DNA backbone from chemical and enzymatic cleavage and are thus involved in dormant spore's high resistance to UV light. This chain is Small, acid-soluble spore protein C3 (SASP-C3), found in Priestia megaterium (Bacillus megaterium).